The primary structure comprises 203 residues: Superoxide dismutase [Mn/Fe] (203 aa).

Fe(3+) is bound by residues His27, His81, Asp163, and His167. 4 residues coordinate Mn(2+): His27, His81, Asp163, and His167.

It belongs to the iron/manganese superoxide dismutase family. The cofactor is Mn(2+). Requires Fe(3+) as cofactor.

It carries out the reaction 2 superoxide + 2 H(+) = H2O2 + O2. Its function is as follows. Destroys superoxide anion radicals which are normally produced within the cells and which are toxic to biological systems. Catalyzes the dismutation of superoxide anion radicals into O2 and H2O2 by successive reduction and oxidation of the transition metal ion at the active site. The sequence is that of Superoxide dismutase [Mn/Fe] (sodA) from Streptococcus mutans serotype c (strain ATCC 700610 / UA159).